A 243-amino-acid polypeptide reads, in one-letter code: 1-(5-phosphoribosyl)-5-[(5-phosphoribosylamino)methylideneamino] imidazole-4-carboxamide isomerase (243 aa).

D8 functions as the Proton acceptor in the catalytic mechanism. The active-site Proton donor is the D129.

The protein belongs to the HisA/HisF family.

The protein resides in the cytoplasm. The catalysed reaction is 1-(5-phospho-beta-D-ribosyl)-5-[(5-phospho-beta-D-ribosylamino)methylideneamino]imidazole-4-carboxamide = 5-[(5-phospho-1-deoxy-D-ribulos-1-ylimino)methylamino]-1-(5-phospho-beta-D-ribosyl)imidazole-4-carboxamide. It functions in the pathway amino-acid biosynthesis; L-histidine biosynthesis; L-histidine from 5-phospho-alpha-D-ribose 1-diphosphate: step 4/9. This Moorella thermoacetica (strain ATCC 39073 / JCM 9320) protein is 1-(5-phosphoribosyl)-5-[(5-phosphoribosylamino)methylideneamino] imidazole-4-carboxamide isomerase.